A 382-amino-acid polypeptide reads, in one-letter code: uncharacterized protein (382 aa).

Helical transmembrane passes span 8-28, 45-65, 75-95, 102-122, 131-151, 157-177, 204-224, 231-251, 270-290, 291-311, 325-345, and 349-369; these read VMLLLCGLLLLTLAIAVLNTL, MVSSSYFTGNLVGTLFTGYLI, YLASLIFAAGCVGLGVMVGFW, FIAGIGCAMIWVVVESALMCS, LLAAYMMVYYMGTFLGQLLVS, LLHVLPWVTGMILAGILPLLF, LGVNGCIISGIVLGSLYGLMP, GMANASIGFWMAVLVSAGILG, VQVFVVILGSIAMLTQAAMAP, ALFILGAAGFTLYPVAMAWAC, ALLLSYTVGSLLGPSFAAMLM, and SDNLLFIMIASVSFIYLLMLL.

Belongs to the major facilitator superfamily. YcaD (TC 2.A.1.26) family.

The protein localises to the cell inner membrane. This is an uncharacterized protein from Salmonella paratyphi B (strain ATCC BAA-1250 / SPB7).